Here is a 168-residue protein sequence, read N- to C-terminus: Ribosome maturation factor RimM (168 aa).

Positions 96–168 constitute a PRC barrel domain; the sequence is EDEYFITDLI…VMIVRLLEGL (73 aa).

It belongs to the RimM family. Binds ribosomal protein uS19.

It localises to the cytoplasm. Its function is as follows. An accessory protein needed during the final step in the assembly of 30S ribosomal subunit, possibly for assembly of the head region. Essential for efficient processing of 16S rRNA. May be needed both before and after RbfA during the maturation of 16S rRNA. It has affinity for free ribosomal 30S subunits but not for 70S ribosomes. This is Ribosome maturation factor RimM from Caldanaerobacter subterraneus subsp. tengcongensis (strain DSM 15242 / JCM 11007 / NBRC 100824 / MB4) (Thermoanaerobacter tengcongensis).